Here is a 142-residue protein sequence, read N- to C-terminus: Coiled-coil-helix-coiled-coil-helix domain-containing protein 10, mitochondrial (142 aa).

A mitochondrion-targeting transit peptide spans methionine 1 to proline 16. Residues methionine 1–serine 20 show a composition bias toward low complexity. 2 disordered regions span residues methionine 1 to methionine 45 and alanine 68 to leucine 97. A compositionally biased stretch (pro residues) spans alanine 21–serine 39. The segment covering proline 80–threonine 90 has biased composition (low complexity). Residues methionine 99 to serine 140 form the CHCH domain. 2 consecutive short sequence motifs (cx9C motif) follow at residues cysteine 102 to cysteine 112 and cysteine 122 to cysteine 132. Intrachain disulfides connect cysteine 102-cysteine 132 and cysteine 112-cysteine 122.

In terms of tissue distribution, ubiquitously expressed. Higher expression is observed in heart and liver.

The protein resides in the mitochondrion intermembrane space. In terms of biological role, may be involved in the maintenance of mitochondrial organization and mitochondrial cristae structure. This Homo sapiens (Human) protein is Coiled-coil-helix-coiled-coil-helix domain-containing protein 10, mitochondrial (CHCHD10).